We begin with the raw amino-acid sequence, 288 residues long: Acyl-CoA-binding domain-containing protein 6 homolog (288 aa).

The 89-residue stretch at 6–94 (IENKFKLAVD…VNALSPGWDS (89 aa)) folds into the ACB domain. An acyl-CoA is bound by residues 36–40 (YCNYK), K62, and Y81. 2 ANK repeats span residues 200–229 (DGRTALIWACDRGYFEIAKLLIENGSNVNV) and 233–263 (EGMTPLHYAVVCDQFEICKLLLSQSSIDKSI).

The protein resides in the cytoplasm. Its function is as follows. Binds long-chain acyl-coenzyme A molecules with a strong preference for unsaturated C18:1-CoA. Does not bind fatty acids. Plays a role in protein N-myristoylation. The protein is Acyl-CoA-binding domain-containing protein 6 homolog (acbd6) of Dictyostelium discoideum (Social amoeba).